Consider the following 1072-residue polypeptide: DNA-directed RNA polymerase subunit beta (1072 aa).

The protein belongs to the RNA polymerase beta chain family. In plastids the minimal PEP RNA polymerase catalytic core is composed of four subunits: alpha, beta, beta', and beta''. When a (nuclear-encoded) sigma factor is associated with the core the holoenzyme is formed, which can initiate transcription.

It localises to the plastid. The protein resides in the chloroplast. The catalysed reaction is RNA(n) + a ribonucleoside 5'-triphosphate = RNA(n+1) + diphosphate. Its function is as follows. DNA-dependent RNA polymerase catalyzes the transcription of DNA into RNA using the four ribonucleoside triphosphates as substrates. In Olimarabidopsis pumila (Dwarf rocket), this protein is DNA-directed RNA polymerase subunit beta.